A 343-amino-acid polypeptide reads, in one-letter code: Tetraacyldisaccharide 4'-kinase (343 aa).

An ATP-binding site is contributed by 51–58; that stretch reads TVGGAGKT.

The protein belongs to the LpxK family.

It carries out the reaction a lipid A disaccharide + ATP = a lipid IVA + ADP + H(+). The protein operates within glycolipid biosynthesis; lipid IV(A) biosynthesis; lipid IV(A) from (3R)-3-hydroxytetradecanoyl-[acyl-carrier-protein] and UDP-N-acetyl-alpha-D-glucosamine: step 6/6. Its function is as follows. Transfers the gamma-phosphate of ATP to the 4'-position of a tetraacyldisaccharide 1-phosphate intermediate (termed DS-1-P) to form tetraacyldisaccharide 1,4'-bis-phosphate (lipid IVA). This is Tetraacyldisaccharide 4'-kinase from Xanthobacter autotrophicus (strain ATCC BAA-1158 / Py2).